Consider the following 364-residue polypeptide: tRNA-specific 2-thiouridylase MnmA 1 (364 aa).

ATP is bound by residues 10–17 (GMSGGVDS) and Met36. Cys106 (nucleophile) is an active-site residue. Cys106 and Cys204 are oxidised to a cystine. Gly130 contacts ATP. The interval 154-156 (KDQ) is interaction with tRNA. The active-site Cysteine persulfide intermediate is Cys204. The interaction with tRNA stretch occupies residues 310 to 311 (RY).

The protein belongs to the MnmA/TRMU family.

Its subcellular location is the cytoplasm. The enzyme catalyses S-sulfanyl-L-cysteinyl-[protein] + uridine(34) in tRNA + AH2 + ATP = 2-thiouridine(34) in tRNA + L-cysteinyl-[protein] + A + AMP + diphosphate + H(+). Catalyzes the 2-thiolation of uridine at the wobble position (U34) of tRNA, leading to the formation of s(2)U34. The protein is tRNA-specific 2-thiouridylase MnmA 1 of Thermoanaerobacter pseudethanolicus (strain ATCC 33223 / 39E) (Clostridium thermohydrosulfuricum).